The following is a 336-amino-acid chain: Gibberellin 2-beta-dioxygenase 7 (336 aa).

The 101-residue stretch at 191 to 291 (LENSFLRLNK…RMSIAFFVCP (101 aa)) folds into the Fe2OG dioxygenase domain. 3 residues coordinate Fe cation: His216, Asp218, and His272. Arg282 is an active-site residue. Arg282 serves as a coordination point for 2-oxoglutarate.

This sequence belongs to the iron/ascorbate-dependent oxidoreductase family. GA2OX subfamily. Requires Fe(2+) as cofactor.

The catalysed reaction is gibberellin A1 + 2-oxoglutarate + O2 = gibberellin A8 + succinate + CO2. Its pathway is plant hormone biosynthesis; gibberellin biosynthesis. In terms of biological role, catalyzes the 2-beta-hydroxylation of gibberellins (GA) precursors, rendering them unable to be converted to active GAs. Hydroxylates the C20-GA GA12 and GA53, but is not active on C19-GAs, like GA1, GA4, GA9 and GA20. This chain is Gibberellin 2-beta-dioxygenase 7 (GA2OX7), found in Arabidopsis thaliana (Mouse-ear cress).